Consider the following 194-residue polypeptide: Lytic chitin monooxygenase (194 aa).

Positions 1–28 (MKKSLLTIVLAFSFVLGGAALAPTVSEA) are cleaved as a signal peptide. 2 residues coordinate Cu cation: H29 and H114. One can recognise a Chitin-binding type-4 domain in the interval 29 to 191 (HGYVASPGSR…VNAFYQAIDV (163 aa)).

Requires Cu(2+) as cofactor.

It localises to the secreted. It carries out the reaction [(1-&gt;4)-N-acetyl-beta-D-glucosaminyl]n+m + reduced acceptor + O2 = [(1-&gt;4)-N-acetyl-beta-D-glucosaminyl]m-1-(1-&gt;4)-2-(acetylamino)-2-deoxy-D-glucono-1,5-lactone + [(1-&gt;4)-N-acetyl-beta-D-glucosaminyl]n + acceptor + H2O.. Its pathway is glycan degradation; chitin degradation. Involved in chitin degradation. Catalyzes the oxidative cleavage of glycosidic bonds in both alpha- and beta-chitin via a copper-dependent mechanism, leading to oxidized chitooligosaccharides with a dominance of even-numbered products. Acts synergistically with the chitinase EfChi18A, and combining the two enzymes leads to rapid and complete depolymerization of crystalline chitin, especially with beta-chitin as a substrate. Is likely involved in a chitin degradation pathway that allows E.faecalis V583 to grow on chitin as a carbon source. This Enterococcus faecalis (strain ATCC 700802 / V583) protein is Lytic chitin monooxygenase.